The chain runs to 421 residues: Putative bifunctional polynucleotide phosphatase/kinase (421 aa).

Residues 25 to 231 (DSYLKGIINN…SENLKTNYKL (207 aa)) are phosphatase. Residues 235–415 (NPTEIIDEIE…DDPKWKRSFM (181 aa)) are kinase. 265–272 (GQPGSGKS) lines the ATP pocket.

In the N-terminal section; belongs to the DNA 3' phosphatase family.

The enzyme catalyses a 3'end (2'-deoxyribonucleotide 3'-phosphate)-DNA + H2O = a 3'-end 2'-deoxyribonucleotide-DNA + phosphate. The catalysed reaction is a 5'-end dephospho-2'-deoxyribonucleoside-DNA + ATP = a 5'-end 5'-phospho-2'-deoxyribonucleoside-DNA + ADP + H(+). The polypeptide is Putative bifunctional polynucleotide phosphatase/kinase (Acanthamoeba polyphaga mimivirus (APMV)).